A 77-amino-acid polypeptide reads, in one-letter code: MSNIEERVKKIIIEQLGVKEEDVKSAASFVDDLGADSLDTVELVMALEEEFDTEIPDEEAEKITTVQAAIDYVSKNQ.

The Carrier domain occupies 2–77; sequence SNIEERVKKI…AAIDYVSKNQ (76 aa). S37 carries the post-translational modification O-(pantetheine 4'-phosphoryl)serine.

It belongs to the acyl carrier protein (ACP) family. Post-translationally, 4'-phosphopantetheine is transferred from CoA to a specific serine of apo-ACP by AcpS. This modification is essential for activity because fatty acids are bound in thioester linkage to the sulfhydryl of the prosthetic group.

It is found in the cytoplasm. It functions in the pathway lipid metabolism; fatty acid biosynthesis. Its function is as follows. Carrier of the growing fatty acid chain in fatty acid biosynthesis. This is Acyl carrier protein from Shewanella denitrificans (strain OS217 / ATCC BAA-1090 / DSM 15013).